Consider the following 223-residue polypeptide: MTTNYAHYIDHTLLAMDATEAQIIKLCEEAKQHHFYAVCVNSGYVPVVAQQLAGSSVKVCSVIGFPLGAGLTAAKAFEAQAAINAGAQEIDMVINVGWLKSGKIADVKADIKAVRDNCAATPLKVILETCLLSDEQIVQVCEMCRELDVAFVKTSTGFSTGGAKEEHVKLMRATVGPVMGVKASGAVRDRATAETMIQAGATRIGTSSGVAIVSGQQAAASGY.

Asp-91 (proton donor/acceptor) is an active-site residue. Catalysis depends on Lys-153, which acts as the Schiff-base intermediate with acetaldehyde. The Proton donor/acceptor role is filled by Lys-182.

The protein belongs to the DeoC/FbaB aldolase family. DeoC type 1 subfamily.

It is found in the cytoplasm. It carries out the reaction 2-deoxy-D-ribose 5-phosphate = D-glyceraldehyde 3-phosphate + acetaldehyde. It participates in carbohydrate degradation; 2-deoxy-D-ribose 1-phosphate degradation; D-glyceraldehyde 3-phosphate and acetaldehyde from 2-deoxy-alpha-D-ribose 1-phosphate: step 2/2. Catalyzes a reversible aldol reaction between acetaldehyde and D-glyceraldehyde 3-phosphate to generate 2-deoxy-D-ribose 5-phosphate. This Yersinia pestis bv. Antiqua (strain Angola) protein is Deoxyribose-phosphate aldolase.